Consider the following 142-residue polypeptide: Hemoglobin subunit alpha-2 (142 aa).

Residue Ser1 is modified to N-acetylserine. The Globin domain maps to Ser1–Arg142. His59 serves as a coordination point for O2. His88 serves as a coordination point for heme b.

The protein belongs to the globin family. As to quaternary structure, hb2 is a heterotetramer of two alpha-2 chains and two beta chains. In terms of tissue distribution, red blood cells.

Involved in oxygen transport from gills to the various peripheral tissues. This Trematomus newnesi (Dusky notothen) protein is Hemoglobin subunit alpha-2 (hba2).